A 700-amino-acid chain; its full sequence is Autophagy-related protein 13 (700 aa).

Residues 319-352 (GSINSSSSPPPGATQSNQSVSSFSTSKPIPVTLN) are disordered. Over residues 332-344 (TQSNQSVSSFSTS) the composition is skewed to low complexity. Residues 399-407 (SSFGSRFRT) are ATG17-binding. Residues 428-487 (TPNNPILHNFRSRNKSPSVSSTELGPSSSIYMDDDLDSFMKMLDSKPDLRFPSNSPSVYE) are ATG1-binding. Residues 506 to 532 (EQQQHGSPSSNQIMIHSQSQTSQSQVF) show a composition bias toward polar residues. Disordered stretches follow at residues 506–562 (EQQQ…PGVS), 576–637 (HASS…NPEL), and 649–700 (ESDD…NQEF). Residues 595 to 631 (SSPPASATAVATVHNSLRRLTSSSQRTNTNSTNSSTR) show a composition bias toward low complexity. Positions 656–667 (DEHSPRSTDTKS) are enriched in basic and acidic residues.

Belongs to the ATG13 family. Fungi subfamily. As to quaternary structure, hypophosphorylated form interacts with ATG1 to form the ATG1-ATG13 kinase complex. The ATG1-ATG13 complex interacts with the ATG17-ATG29-ATG31 complex through direct interaction with ATG17. Interacts with VAC8.

The protein localises to the cytoplasm. It is found in the preautophagosomal structure. Activates the ATG1 kinase in a nutritional condition dependent manner through the TOR pathway, leading to autophagy. Involved in ATG9 and ATG23 cycling through the pre-autophagosomal structure. Also involved in cytoplasm to vacuole transport (Cvt) and more specifically in Cvt vesicle formation. Seems to play a role in the switching machinery regulating the conversion between the Cvt pathway and autophagy. Finally, ATG13 is also required for glycogen storage during stationary phase. Functionally, acts as a negative regulator of xylose alcoholic fermentation, a role that is not related to autophagy. The chain is Autophagy-related protein 13 from Ogataea parapolymorpha (strain ATCC 26012 / BCRC 20466 / JCM 22074 / NRRL Y-7560 / DL-1) (Yeast).